The following is a 352-amino-acid chain: Quinolinate synthase (352 aa).

Iminosuccinate is bound by residues H48 and S69. C114 is a [4Fe-4S] cluster binding site. Iminosuccinate-binding positions include 140–142 and S157; that span reads YAN. [4Fe-4S] cluster is bound at residue C201. Iminosuccinate-binding positions include 227-229 and T244; that span reads HPE. C298 serves as a coordination point for [4Fe-4S] cluster.

It belongs to the quinolinate synthase family. Type 1 subfamily. It depends on [4Fe-4S] cluster as a cofactor.

Its subcellular location is the cytoplasm. It carries out the reaction iminosuccinate + dihydroxyacetone phosphate = quinolinate + phosphate + 2 H2O + H(+). It participates in cofactor biosynthesis; NAD(+) biosynthesis; quinolinate from iminoaspartate: step 1/1. Its function is as follows. Catalyzes the condensation of iminoaspartate with dihydroxyacetone phosphate to form quinolinate. The protein is Quinolinate synthase of Pseudomonas syringae pv. tomato (strain ATCC BAA-871 / DC3000).